A 686-amino-acid chain; its full sequence is Disintegrin and metalloproteinase domain-containing protein 17 homolog (686 aa).

Positions 1 to 21 are cleaved as a signal peptide; it reads MKIQDRSLLIFLVLGILKSDA. Residues 22 to 177 constitute a propeptide that is removed on maturation; the sequence is FNTRVKRHAP…RRAIAIPSDR (156 aa). N-linked (GlcNAc...) asparagine glycosylation is found at Asn59, Asn206, and Asn262. At 178-637 the chain is on the extracellular side; that stretch reads RKDVLNVKRN…TGGVLEFIKT (460 aa). Residues 187–445 form the Peptidase M12B domain; sequence NRCTLKLVAD…KWESCFQEEM (259 aa). Intrachain disulfides connect Cys328–Cys440 and Cys394–Cys424. His370 is a Zn(2+) binding site. Glu371 is an active-site residue. Zn(2+) contacts are provided by His374 and His380. The Disintegrin domain maps to 446–535; sequence TSFCGNGIVE…ECPSAPPVRD (90 aa). An N-linked (GlcNAc...) asparagine glycan is attached at Asn501. Cysteines 506 and 527 form a disulfide. An N-linked (GlcNAc...) asparagine glycan is attached at Asn581. Residues 638 to 658 traverse the membrane as a helical segment; the sequence is HIVVIAIIFFTLIFVGIYKIV. Residues 659–686 are Cytoplasmic-facing; sequence KYGENFTEKVTHKTAGGCRSVFVKADVN.

Requires Zn(2+) as cofactor.

The protein resides in the cell membrane. In terms of biological role, metalloprotease. Acts together with protease sup-17 to facilitate lin-12/Notch signaling during developmental cell fate decision, including anchor cell/ventral uterine precursor cell decision. By modulating glp-1/Notch signaling, plays a role in germline development. The protein is Disintegrin and metalloproteinase domain-containing protein 17 homolog of Caenorhabditis elegans.